Reading from the N-terminus, the 83-residue chain is Cytotoxin homolog 5V (83 aa).

An N-terminal signal peptide occupies residues Met-1–Thr-21. Intrachain disulfides connect Cys-24–Cys-43, Cys-36–Cys-61, Cys-65–Cys-76, and Cys-77–Cys-82.

It belongs to the three-finger toxin family. Short-chain subfamily. Orphan group XV sub-subfamily. In terms of tissue distribution, expressed by the venom gland.

It localises to the secreted. It is found in the target cell membrane. Functionally, has low cytotoxic activity. The chain is Cytotoxin homolog 5V from Naja atra (Chinese cobra).